The sequence spans 526 residues: MTAVCLHPGRLTLAELRTIAFSDSRLELEPACFPVVARGAATVAAIARSGEPAYGINTGFGRLAQTHIPDDQLELLQKNLVLSHAVGVGEPLSAPTVRLVLALKIASLARGHSGVRMELINALLGLFNAGVIPRVPSKGSVGASGDLAPLAHLSALLLGIGEAYVDGRHVPATEALAIAGLAPMTLAAKEGLALLNGTQVSTALALVNLFAIETVFRTALVAGALSVDAAAGSFKPFDARIHALRGQPGQIDAAATYRQLLEGSGINLAHRDCGKVQDPYSLRCQPQVMGACLDQMRHAARVLLIEANAVSDNPLVFPDSGEVLSGGNFHGEPVAFAADALALAAAEIGALAERRIALLIDATLSGLPPFLVTEGGVNSGFMIAHVTAAALASENKLLAHPASVDSLPTSANQEDHVSMSTFAARKLGELADNTATILAIELLAAAQGVELRAPHRTSPRLQAVLALIRSRVPHYDIDRYFAPDIASIKDEVSAGAFARHCPLSFDSERVADGEASRSATPDDESL.

Positions 143-145 (ASG) form a cross-link, 5-imidazolinone (Ala-Gly). S144 is modified (2,3-didehydroalanine (Ser)).

It belongs to the PAL/histidase family. In terms of processing, contains an active site 4-methylidene-imidazol-5-one (MIO), which is formed autocatalytically by cyclization and dehydration of residues Ala-Ser-Gly.

The protein localises to the cytoplasm. It catalyses the reaction L-histidine = trans-urocanate + NH4(+). It participates in amino-acid degradation; L-histidine degradation into L-glutamate; N-formimidoyl-L-glutamate from L-histidine: step 1/3. In Aromatoleum aromaticum (strain DSM 19018 / LMG 30748 / EbN1) (Azoarcus sp. (strain EbN1)), this protein is Histidine ammonia-lyase.